Here is a 288-residue protein sequence, read N- to C-terminus: Cyclin-dependent kinase 2 homolog (288 aa).

A Protein kinase domain is found at 4–284 (YHGLEKIGEG…AKQAIEHPYF (281 aa)). Residues 10–18 (IGEGTYGVV) and K32 each bind ATP. T14 carries the post-translational modification Phosphothreonine. Phosphotyrosine is present on Y15. The Proton acceptor role is filled by D125. Position 158 is a phosphothreonine (T158).

It belongs to the protein kinase superfamily. CMGC Ser/Thr protein kinase family. CDC2/CDKX subfamily. May form a complex composed of at least the catalytic subunit CRK2 and a cyclin. Requires Mg(2+) as cofactor.

It is found in the cytoplasm. The catalysed reaction is L-seryl-[protein] + ATP = O-phospho-L-seryl-[protein] + ADP + H(+). It carries out the reaction L-threonyl-[protein] + ATP = O-phospho-L-threonyl-[protein] + ADP + H(+). The enzyme catalyses [DNA-directed RNA polymerase] + ATP = phospho-[DNA-directed RNA polymerase] + ADP + H(+). Phosphorylation at Thr-14 or Tyr-15 inactivates the enzyme, while phosphorylation at Thr-158 activates it. Its function is as follows. Serine/threonine-protein kinase. Involved in the control of the cell cycle. Required for entry into S-phase and mitosis. Probable component of the kinase complex that phosphorylates the repetitive C-terminus of RNA polymerase II. The protein is Cyclin-dependent kinase 2 homolog of Plasmodium berghei (strain Anka).